The chain runs to 339 residues: Protoheme IX farnesyltransferase (339 aa).

The interval 1–27 is disordered; the sequence is MTVADPRLTDAPAHSRTSLLGRRRGGR. The next 9 helical transmembrane spans lie at 45–65, 67–87, 117–136, 140–159, 165–185, 191–211, 236–256, 257–277, and 309–329; these read IVELLLITTIPVMLFAAGGLP, GWLILTTFVGGALAAGCANTL, ALVFATVLGIASTAIFVAFV, SAALALGAILLYVVGYTLLL, QNIVWGGVAGCMQVLIGWTAV, WAPFVLFGVIFLWTPPHYWPL, VSRQIVLYTIAMVLCSLLLVP, LGGAGVVYGAAALVLGIGFLV, and PMGVFHGSITYLTLLSAAVAV.

The protein belongs to the UbiA prenyltransferase family. Protoheme IX farnesyltransferase subfamily.

Its subcellular location is the cell membrane. It catalyses the reaction heme b + (2E,6E)-farnesyl diphosphate + H2O = Fe(II)-heme o + diphosphate. Its pathway is porphyrin-containing compound metabolism; heme O biosynthesis; heme O from protoheme: step 1/1. In terms of biological role, converts heme B (protoheme IX) to heme O by substitution of the vinyl group on carbon 2 of heme B porphyrin ring with a hydroxyethyl farnesyl side group. This chain is Protoheme IX farnesyltransferase, found in Kineococcus radiotolerans (strain ATCC BAA-149 / DSM 14245 / SRS30216).